The chain runs to 439 residues: Maintenance of mitochondrial morphology protein 1 (439 aa).

Over 1-76 the chain is Lumenal; that stretch reads MSQDLIETTA…NGNTWSFTQG (76 aa). A helical membrane pass occupies residues 77–97; that stretch reads LVIGQVSVIFIIIVFVKFFVF. At 98 to 439 the chain is on the cytoplasmic side; the sequence is ADSSSHIPTK…TPGEYVNSNI (342 aa). Disordered stretches follow at residues 125–145, 309–336, and 405–425; these read KHSN…SLDS, MNGY…DGGT, and REPV…GTSA. The region spanning 165-395 is the SMP-LTD domain; that stretch reads ASESLDWFNV…EPRFQVVRLP (231 aa). Low complexity-rich tracts occupy residues 315–326 and 410–424; these read ENANGDGASSSN and KKTT…NGTS.

Belongs to the MMM1 family. Homodimer. Component of the ER-mitochondria encounter structure (ERMES) or MDM complex, composed of MMM1, MDM10, MDM12 and MDM34. An MMM1 homodimer associates with one molecule of MDM12 on each side in a pairwise head-to-tail manner, and the SMP-LTD domains of MMM1 and MDM12 generate a continuous hydrophobic tunnel for phospholipid trafficking.

It is found in the endoplasmic reticulum membrane. In terms of biological role, component of the ERMES/MDM complex, which serves as a molecular tether to connect the endoplasmic reticulum (ER) and mitochondria. Components of this complex are involved in the control of mitochondrial shape and protein biogenesis, and function in nonvesicular lipid trafficking between the ER and mitochondria. The MDM12-MMM1 subcomplex functions in the major beta-barrel assembly pathway that is responsible for biogenesis of all outer membrane beta-barrel proteins, and acts in a late step after the SAM complex. The MDM10-MDM12-MMM1 subcomplex further acts in the TOM40-specific pathway after the action of the MDM12-MMM1 complex. Essential for establishing and maintaining the structure of mitochondria and maintenance of mtDNA nucleoids. In Candida albicans (strain WO-1) (Yeast), this protein is Maintenance of mitochondrial morphology protein 1.